Here is a 453-residue protein sequence, read N- to C-terminus: tRNA modification GTPase MnmE (453 aa).

(6S)-5-formyl-5,6,7,8-tetrahydrofolate-binding residues include R22, E79, and K119. The 162-residue stretch at 215–376 (GMKVVIAGRP…LKQHLKSLMG (162 aa)) folds into the TrmE-type G domain. N225 contributes to the K(+) binding site. Residues 225–230 (NAGKSS), 244–250 (TEIAGTT), 269–272 (DTAG), and 334–337 (NKAD) each bind GTP. S229 lines the Mg(2+) pocket. Residues T244, I246, and T249 each contribute to the K(+) site. T250 is a Mg(2+) binding site. Residue K453 coordinates (6S)-5-formyl-5,6,7,8-tetrahydrofolate.

Belongs to the TRAFAC class TrmE-Era-EngA-EngB-Septin-like GTPase superfamily. TrmE GTPase family. As to quaternary structure, homodimer. Heterotetramer of two MnmE and two MnmG subunits. It depends on K(+) as a cofactor.

The protein resides in the cytoplasm. Exhibits a very high intrinsic GTPase hydrolysis rate. Involved in the addition of a carboxymethylaminomethyl (cmnm) group at the wobble position (U34) of certain tRNAs, forming tRNA-cmnm(5)s(2)U34. In Shewanella pealeana (strain ATCC 700345 / ANG-SQ1), this protein is tRNA modification GTPase MnmE.